A 256-amino-acid polypeptide reads, in one-letter code: Probable transcriptional regulatory protein cce_0894 (256 aa).

This sequence belongs to the TACO1 family.

It is found in the cytoplasm. The chain is Probable transcriptional regulatory protein cce_0894 from Crocosphaera subtropica (strain ATCC 51142 / BH68) (Cyanothece sp. (strain ATCC 51142)).